The sequence spans 214 residues: uncharacterized protein (214 aa).

Residues 1–17 form the signal peptide; that stretch reads MLKKIIILFLGVFVLSG. The N-palmitoyl cysteine moiety is linked to residue Cys-18. The S-diacylglycerol cysteine moiety is linked to residue Cys-18. Positions 64–77 are enriched in acidic residues; sequence DNLDDPEDDDDDYD. Disordered stretches follow at residues 64-83, 106-138, and 166-197; these read DNLDDPEDDDDDYDNPLRGE, YKAESGESSDDDDMTLSKANKKVRKDNTDKERK, and TANQNYVPPVSNYEPVAPVKNNKPYNNNSKVK. The stretch at 120 to 162 forms a coiled coil; the sequence is TLSKANKKVRKDNTDKERKMQEELDQIKAMLRETKRDISKYTC.

It localises to the cell membrane. This is an uncharacterized protein from Rickettsia bellii (strain RML369-C).